A 692-amino-acid polypeptide reads, in one-letter code: Elongation factor G (692 aa).

The 276-residue stretch at N8–T283 folds into the tr-type G domain. Residues A17 to T24, D81 to H85, and N135 to D138 each bind GTP.

Belongs to the TRAFAC class translation factor GTPase superfamily. Classic translation factor GTPase family. EF-G/EF-2 subfamily.

Its subcellular location is the cytoplasm. Its function is as follows. Catalyzes the GTP-dependent ribosomal translocation step during translation elongation. During this step, the ribosome changes from the pre-translocational (PRE) to the post-translocational (POST) state as the newly formed A-site-bound peptidyl-tRNA and P-site-bound deacylated tRNA move to the P and E sites, respectively. Catalyzes the coordinated movement of the two tRNA molecules, the mRNA and conformational changes in the ribosome. In Helicobacter pylori (strain Shi470), this protein is Elongation factor G.